A 399-amino-acid polypeptide reads, in one-letter code: Tyrosine--tRNA ligase 2 (399 aa).

Positions P42–H51 match the 'HIGH' region motif. The 'KMSKS' region signature appears at K226–S230. Position 229 (K229) interacts with ATP. Residues M336–L396 enclose the S4 RNA-binding domain.

It belongs to the class-I aminoacyl-tRNA synthetase family. TyrS type 2 subfamily. As to quaternary structure, homodimer.

The protein resides in the cytoplasm. The enzyme catalyses tRNA(Tyr) + L-tyrosine + ATP = L-tyrosyl-tRNA(Tyr) + AMP + diphosphate + H(+). Its function is as follows. Catalyzes the attachment of tyrosine to tRNA(Tyr) in a two-step reaction: tyrosine is first activated by ATP to form Tyr-AMP and then transferred to the acceptor end of tRNA(Tyr). This chain is Tyrosine--tRNA ligase 2, found in Pseudomonas aeruginosa (strain ATCC 15692 / DSM 22644 / CIP 104116 / JCM 14847 / LMG 12228 / 1C / PRS 101 / PAO1).